Here is an 820-residue protein sequence, read N- to C-terminus: Leucine--tRNA ligase (820 aa).

The short motif at 42–52 is the 'HIGH' region element; it reads PYPSGDLHMGH. A 'KMSKS' region motif is present at residues 576–580; sequence KMSKS. Residue K579 participates in ATP binding.

The protein belongs to the class-I aminoacyl-tRNA synthetase family.

Its subcellular location is the cytoplasm. The catalysed reaction is tRNA(Leu) + L-leucine + ATP = L-leucyl-tRNA(Leu) + AMP + diphosphate. In Coxiella burnetii (strain Dugway 5J108-111), this protein is Leucine--tRNA ligase.